The following is a 549-amino-acid chain: Elongator complex protein 3 (549 aa).

The 291-residue stretch at 84–374 (RTASGIAVVA…YRVQRDIPMP (291 aa)) folds into the Radical SAM core domain. The [4Fe-4S] cluster site is built by Cys101, Cys111, and Cys114. Residues Lys166, 476–479 (ELHV), 499–501 (FGM), and Tyr532 contribute to the acetyl-CoA site. Residues 398–549 (TECRDVRTRE…EGPYMVKKLD (152 aa)) form the N-acetyltransferase domain.

This sequence belongs to the ELP3 family. Component of the elongator complex. Interacts with transcriptional repressors snai1 and snai2; interaction with snai1 inhibits its ubiquitination and stabilizes it. Requires [4Fe-4S] cluster as cofactor.

It localises to the cytoplasm. Its subcellular location is the nucleus. The catalysed reaction is uridine(34) in tRNA + acetyl-CoA + S-adenosyl-L-methionine + H2O = 5-(carboxymethyl)uridine(34) in tRNA + 5'-deoxyadenosine + L-methionine + CoA + 2 H(+). It participates in tRNA modification; 5-methoxycarbonylmethyl-2-thiouridine-tRNA biosynthesis. Its function is as follows. Catalytic tRNA acetyltransferase subunit of the elongator complex which is required for multiple tRNA modifications, including mcm5U (5-methoxycarbonylmethyl uridine), mcm5s2U (5-methoxycarbonylmethyl-2-thiouridine), and ncm5U (5-carbamoylmethyl uridine). In the elongator complex, acts as a tRNA uridine(34) acetyltransferase by mediating formation of carboxymethyluridine in the wobble base at position 34 in tRNAs. Stabilizes transcriptional repressor snai1 by inhibiting its ubiquitination which promotes neural crest cell migration. This is Elongator complex protein 3 from Xenopus tropicalis (Western clawed frog).